The primary structure comprises 307 residues: Dihydroorotate dehydrogenase B (NAD(+)), catalytic subunit (307 aa).

FMN is bound by residues S20 and 44 to 45 (KT). Residues K44 and 68–72 (NSIGL) each bind substrate. FMN is bound by residues N98 and N126. A substrate-binding site is contributed by N126. C129 functions as the Nucleophile in the catalytic mechanism. 2 residues coordinate FMN: K164 and I190. Residue 191–192 (NT) participates in substrate binding. FMN is bound by residues G216, 242–243 (GG), and 264–265 (GS).

Belongs to the dihydroorotate dehydrogenase family. Type 1 subfamily. Heterotetramer of 2 PyrK and 2 PyrD type B subunits. FMN is required as a cofactor.

The protein localises to the cytoplasm. It carries out the reaction (S)-dihydroorotate + NAD(+) = orotate + NADH + H(+). It participates in pyrimidine metabolism; UMP biosynthesis via de novo pathway; orotate from (S)-dihydroorotate (NAD(+) route): step 1/1. Catalyzes the conversion of dihydroorotate to orotate with NAD(+) as electron acceptor. The protein is Dihydroorotate dehydrogenase B (NAD(+)), catalytic subunit (pyrD) of Carboxydothermus hydrogenoformans (strain ATCC BAA-161 / DSM 6008 / Z-2901).